We begin with the raw amino-acid sequence, 90 residues long: uncharacterized protein (90 aa).

K88 participates in a covalent cross-link: Isoglutamyl lysine isopeptide (Lys-Gln) (interchain with Q-Cter in protein Pup).

This is an uncharacterized protein from Mycolicibacterium smegmatis (strain ATCC 700084 / mc(2)155) (Mycobacterium smegmatis).